The primary structure comprises 613 residues: Dihydroxy-acid dehydratase (613 aa).

A Mg(2+)-binding site is contributed by Asp-81. Residue Cys-122 participates in [2Fe-2S] cluster binding. Residues Asp-123 and Lys-124 each contribute to the Mg(2+) site. The residue at position 124 (Lys-124) is an N6-carboxylysine. Residue Cys-195 coordinates [2Fe-2S] cluster. A Mg(2+)-binding site is contributed by Glu-491. The Proton acceptor role is filled by Ser-517.

It belongs to the IlvD/Edd family. Homodimer. The cofactor is [2Fe-2S] cluster. It depends on Mg(2+) as a cofactor.

The enzyme catalyses (2R)-2,3-dihydroxy-3-methylbutanoate = 3-methyl-2-oxobutanoate + H2O. It carries out the reaction (2R,3R)-2,3-dihydroxy-3-methylpentanoate = (S)-3-methyl-2-oxopentanoate + H2O. Its pathway is amino-acid biosynthesis; L-isoleucine biosynthesis; L-isoleucine from 2-oxobutanoate: step 3/4. It participates in amino-acid biosynthesis; L-valine biosynthesis; L-valine from pyruvate: step 3/4. Its function is as follows. Functions in the biosynthesis of branched-chain amino acids. Catalyzes the dehydration of (2R,3R)-2,3-dihydroxy-3-methylpentanoate (2,3-dihydroxy-3-methylvalerate) into 2-oxo-3-methylpentanoate (2-oxo-3-methylvalerate) and of (2R)-2,3-dihydroxy-3-methylbutanoate (2,3-dihydroxyisovalerate) into 2-oxo-3-methylbutanoate (2-oxoisovalerate), the penultimate precursor to L-isoleucine and L-valine, respectively. This Vibrio cholerae serotype O1 (strain ATCC 39541 / Classical Ogawa 395 / O395) protein is Dihydroxy-acid dehydratase.